The primary structure comprises 173 residues: T-cell receptor beta-1 chain C region (173 aa).

The tract at residues E1–E146 is c region. C31 and C71 are disulfide-bonded. 2 N-linked (GlcNAc...) asparagine glycosylation sites follow: N67 and N116. The helical transmembrane segment at E146 to M167 threads the bilayer. At V168–S173 the chain is on the cytoplasmic side.

It is found in the membrane. This Mus musculus (Mouse) protein is T-cell receptor beta-1 chain C region.